A 660-amino-acid polypeptide reads, in one-letter code: Acetyl-coenzyme A synthetase (660 aa).

CoA is bound by residues 197–200 (RGGK) and T317. ATP is bound by residues 397–399 (GEP), 421–426 (DTFWQT), D512, and R528. Position 536 (S536) interacts with CoA. Residue R539 participates in ATP binding. Residues V550 and V555 each coordinate Mg(2+). K625 is modified (N6-acetyllysine).

The protein belongs to the ATP-dependent AMP-binding enzyme family. It depends on Mg(2+) as a cofactor. In terms of processing, acetylated. Deacetylation by the SIR2-homolog deacetylase activates the enzyme.

The catalysed reaction is acetate + ATP + CoA = acetyl-CoA + AMP + diphosphate. Its function is as follows. Catalyzes the conversion of acetate into acetyl-CoA (AcCoA), an essential intermediate at the junction of anabolic and catabolic pathways. AcsA undergoes a two-step reaction. In the first half reaction, AcsA combines acetate with ATP to form acetyl-adenylate (AcAMP) intermediate. In the second half reaction, it can then transfer the acetyl group from AcAMP to the sulfhydryl group of CoA, forming the product AcCoA. The protein is Acetyl-coenzyme A synthetase of Herminiimonas arsenicoxydans.